The chain runs to 91 residues: Cell division topological specificity factor (91 aa).

It belongs to the MinE family.

Functionally, prevents the cell division inhibition by proteins MinC and MinD at internal division sites while permitting inhibition at polar sites. This ensures cell division at the proper site by restricting the formation of a division septum at the midpoint of the long axis of the cell. The chain is Cell division topological specificity factor from Bradyrhizobium diazoefficiens (strain JCM 10833 / BCRC 13528 / IAM 13628 / NBRC 14792 / USDA 110).